A 280-amino-acid chain; its full sequence is Orotidine 5'-phosphate decarboxylase (280 aa).

Lys97 (proton donor) is an active-site residue.

Belongs to the OMP decarboxylase family. Type 2 subfamily.

The catalysed reaction is orotidine 5'-phosphate + H(+) = UMP + CO2. Its pathway is pyrimidine metabolism; UMP biosynthesis via de novo pathway; UMP from orotate: step 2/2. In Corynebacterium efficiens (strain DSM 44549 / YS-314 / AJ 12310 / JCM 11189 / NBRC 100395), this protein is Orotidine 5'-phosphate decarboxylase (pyrF).